Reading from the N-terminus, the 130-residue chain is MVMLDILSNALIQIKNAEVMGKRQVTIWPVNKLTYYTLRVLQRYGYVGEIEYVDDGRGGKYIVQLLGKINDIGPIRPRYPVKYREIVQWEQKFLPARQIGILVISTSQGVVSHIEAKEKKIGGVLLAYVY.

It belongs to the universal ribosomal protein uS8 family. Part of the 30S ribosomal subunit.

Its function is as follows. One of the primary rRNA binding proteins, it binds directly to 16S rRNA central domain where it helps coordinate assembly of the platform of the 30S subunit. The polypeptide is Small ribosomal subunit protein uS8 (Pyrobaculum arsenaticum (strain DSM 13514 / JCM 11321 / PZ6)).